The primary structure comprises 436 residues: Na(+)/H(+) antiporter NhaA 2 (436 aa).

Transmembrane regions (helical) follow at residues 35-55 (FGGGLLLLGAVLALLWANSPW), 80-100 (LATWAADGLLAIFFFVVGLEL), 116-136 (ALPVVAAIGGMIVPALIYVGI), 147-167 (GWAIPTATDIAFALAVLAVIG), 176-196 (AFLLTLAVVDDLLAITVIAIF), 201-221 (FKLTPLLVALLPIALFGLLVQ), 226-246 (WWWALIPLAVVAWTLVHESGV), 283-303 (VSAGFAVPVFAFFAAGVSLRG), 313-333 (PIVVGIVAGLVLGKVLGIFGS), 354-374 (LLGVSLLAGIGFTVSLLIGEL), and 385-405 (VKAAVLTGSVIAALLASAVLS).

It belongs to the NhaA Na(+)/H(+) (TC 2.A.33) antiporter family.

It localises to the cell membrane. It catalyses the reaction Na(+)(in) + 2 H(+)(out) = Na(+)(out) + 2 H(+)(in). In terms of biological role, na(+)/H(+) antiporter that extrudes sodium in exchange for external protons. This chain is Na(+)/H(+) antiporter NhaA 2, found in Salinispora arenicola (strain CNS-205).